Here is a 426-residue protein sequence, read N- to C-terminus: MTLWVLGLNHQTAPVDLRERAAFAGDALPRALESLRALPQVSEAALLSTCNRTELYAMAEEAHSLVTWLETHAPALSGYLYQHQEAEAVRHLFRVATGLDSMVLGEPQILGQVKDAWAVARAHGTLGSGLDRLFQQTFSVAKRARTDTRVGANPVSVASTAVRLAQDSFARLNESTVLLIGAGETIELAAKHLSEGRVRRLLIANRTLAHAQTLASQHGGFALPLTDLERHLAEADVVFSATAAREPLVTRAQVEQALRARKRKPMLLFDLAVPRDIEASVGELSDAYLYTVDDLERAVEDNRRGRREAADQAEAIIDLQVARYVETLQANARQAPLKRLRAFGDSTRDELLAKARQQLHNGKPADEVLEQLAHALTNRLLHPPTAALRDAALNNDLELTTAADRLFPEKPGLPTSPHSYPDREDR.

Residues threonine 49–arginine 52, serine 101, glutamate 106–glutamine 108, and glutamine 112 each bind substrate. The active-site Nucleophile is cysteine 50. Glycine 181–isoleucine 186 contacts NADP(+). Residues aspartate 404–arginine 426 form a disordered region.

It belongs to the glutamyl-tRNA reductase family. As to quaternary structure, homodimer.

The enzyme catalyses (S)-4-amino-5-oxopentanoate + tRNA(Glu) + NADP(+) = L-glutamyl-tRNA(Glu) + NADPH + H(+). It functions in the pathway porphyrin-containing compound metabolism; protoporphyrin-IX biosynthesis; 5-aminolevulinate from L-glutamyl-tRNA(Glu): step 1/2. In terms of biological role, catalyzes the NADPH-dependent reduction of glutamyl-tRNA(Glu) to glutamate 1-semialdehyde (GSA). The sequence is that of Glutamyl-tRNA reductase from Xanthomonas campestris pv. phaseoli.